The following is a 189-amino-acid chain: Urease accessory protein UreF (189 aa).

Belongs to the UreF family. UreD, UreF and UreG form a complex that acts as a GTP-hydrolysis-dependent molecular chaperone, activating the urease apoprotein by helping to assemble the nickel containing metallocenter of UreC. The UreE protein probably delivers the nickel.

The protein resides in the cytoplasm. In terms of biological role, required for maturation of urease via the functional incorporation of the urease nickel metallocenter. The sequence is that of Urease accessory protein UreF from Staphylococcus xylosus.